The following is a 116-amino-acid chain: Large ribosomal subunit protein bL19 (116 aa).

This sequence belongs to the bacterial ribosomal protein bL19 family.

Its function is as follows. This protein is located at the 30S-50S ribosomal subunit interface and may play a role in the structure and function of the aminoacyl-tRNA binding site. In Staphylococcus saprophyticus subsp. saprophyticus (strain ATCC 15305 / DSM 20229 / NCIMB 8711 / NCTC 7292 / S-41), this protein is Large ribosomal subunit protein bL19.